The chain runs to 79 residues: U-actitoxin-Avd9d (79 aa).

An N-terminal signal peptide occupies residues 1–19; it reads NLKVLAVFVLCAILVVVTA. The propeptide occupies 20–37; it reads ERRGTETGGYKKDTLEDL. The region spanning 44–79 is the ShKT domain; that stretch reads CFDSFKEATCHMAKTNRLCKTSAKYQINCKKTCGLC. Intrachain disulfides connect C44-C79, C53-C72, and C62-C76. A crucial for binding to potassium channels region spans residues 67–68; that stretch reads KY.

It belongs to the sea anemone type 1 potassium channel toxin family. Type 1b subfamily.

The protein localises to the secreted. The protein resides in the nematocyst. In terms of biological role, inhibits voltage-gated potassium channels (Kv1/KCNA). The sequence is that of U-actitoxin-Avd9d from Anemonia viridis (Snakelocks anemone).